Here is a 240-residue protein sequence, read N- to C-terminus: uncharacterized protein (240 aa).

2 consecutive transmembrane segments (helical) span residues 16-36 and 67-87; these read AVFFLYAALAIIGFAIGYFIP and FITALLGMCAGIWFAHSVIAM.

It is found in the cell membrane. This is an uncharacterized protein from Bacillus subtilis (strain 168).